Reading from the N-terminus, the 396-residue chain is Queuine tRNA-ribosyltransferase catalytic subunit 1 (396 aa).

Asp99 acts as the Proton acceptor in catalysis. Queuine contacts are provided by residues 99–103 (DSGGF), Asp153, Gln196, and Gly223. The RNA binding stretch occupies residues 254 to 260 (GVGYATD). The Nucleophile role is filled by Asp273. An RNA binding; important for wobble base 34 recognition region spans residues 278-282 (TRTAR). Cys311, Cys313, Cys316, and His341 together coordinate Zn(2+).

This sequence belongs to the queuine tRNA-ribosyltransferase family. Heterodimer of a catalytic subunit qtrt1 and an accessory subunit qtrt2. Requires Zn(2+) as cofactor.

Its subcellular location is the cytoplasm. The protein resides in the mitochondrion outer membrane. The catalysed reaction is guanosine(34) in tRNA + queuine = queuosine(34) in tRNA + guanine. In terms of biological role, catalytic subunit of the queuine tRNA-ribosyltransferase (TGT) that catalyzes the base-exchange of a guanine (G) residue with queuine (Q) at position 34 (anticodon wobble position) in tRNAs with GU(N) anticodons (tRNA-Asp, -Asn, -His and -Tyr), resulting in the hypermodified nucleoside queuosine (7-(((4,5-cis-dihydroxy-2-cyclopenten-1-yl)amino)methyl)-7-deazaguanosine). Catalysis occurs through a double-displacement mechanism. The nucleophile active site attacks the C1' of nucleotide 34 to detach the guanine base from the RNA, forming a covalent enzyme-RNA intermediate. The proton acceptor active site deprotonates the incoming queuine, allowing a nucleophilic attack on the C1' of the ribose to form the product. This is Queuine tRNA-ribosyltransferase catalytic subunit 1 from Xenopus laevis (African clawed frog).